We begin with the raw amino-acid sequence, 400 residues long: Autophagy-related protein 18 (400 aa).

WD repeat units follow at residues 163–203 (AHKS…KLYQ) and 208–247 (SMPS…PSED). A L/FRRG motif motif is present at residues 204–208 (FRRGS). The segment at 241–296 (HQDPSEDLPTSPIGTDSRKTNSTPRERAFSQGSSTLSGGDNSPTDGDPSDISSRKH) is disordered. The span at 256–268 (DSRKTNSTPRERA) shows a compositional bias: basic and acidic residues. The segment covering 270–284 (SQGSSTLSGGDNSPT) has biased composition (polar residues). 2 WD repeats span residues 295 to 341 (KHNG…AWIR) and 353 to 393 (SNAG…GGEG).

It belongs to the WD repeat PROPPIN family. As to quaternary structure, component of the PI(3,5)P2 regulatory complex.

Its subcellular location is the preautophagosomal structure membrane. It is found in the vacuole membrane. The protein resides in the endosome membrane. In terms of biological role, the PI(3,5)P2 regulatory complex regulates both the synthesis and turnover of phosphatidylinositol 3,5-bisphosphate (PtdIns(3,5)P2). Necessary for proper vacuole morphology. Plays an important role in osmotically-induced vacuole fragmentation. Required for cytoplasm to vacuole transport (Cvt) vesicle formation, pexophagy and starvation-induced autophagy. Involved in correct ATG9 trafficking to the pre-autophagosomal structure. Might also be involved in premeiotic DNA replication. The polypeptide is Autophagy-related protein 18 (ATG18) (Ajellomyces capsulatus (strain NAm1 / WU24) (Darling's disease fungus)).